A 620-amino-acid chain; its full sequence is UvrABC system protein C (620 aa).

The GIY-YIG domain occupies 13 to 92 (DKPGVYIMKN…IKKYSPRYNI (80 aa)). The region spanning 204–239 (TSIIKNLKLEMEKAAEELEFEKAAKIRDRILAIELI) is the UVR domain.

The protein belongs to the UvrC family. Interacts with UvrB in an incision complex.

Its subcellular location is the cytoplasm. Functionally, the UvrABC repair system catalyzes the recognition and processing of DNA lesions. UvrC both incises the 5' and 3' sides of the lesion. The N-terminal half is responsible for the 3' incision and the C-terminal half is responsible for the 5' incision. The polypeptide is UvrABC system protein C (Clostridium perfringens (strain SM101 / Type A)).